The sequence spans 871 residues: Protein pob1 (871 aa).

In terms of domain architecture, SH3 spans 2-65; sequence ASQRFVIALH…PASHVELISD (64 aa). A disordered region spans residues 42-168; sequence WWEGEDEQGN…PSSDLSNFNT (127 aa). Positions 62–80 are enriched in basic and acidic residues; the sequence is LISDERSDSSDSRRGKEDF. Composition is skewed to low complexity over residues 88 to 100 and 109 to 124; these read TRSS…STSS and LYSN…SILN. A compositionally biased stretch (polar residues) spans 131–168; sequence SKPSVPSNFNSMFPSSKQEGPSPLLDNQPSSDLSNFNT. S224 and S225 each carry phosphoserine. A Phosphotyrosine modification is found at Y229. S241 bears the Phosphoserine mark. One can recognise an SAM domain in the interval 250–313; that stretch reads WSTEEVVEWL…LRKIQQLKDS (64 aa). Residues 329 to 343 show a composition bias toward low complexity; it reads ISVSQSSDSSSSIPK. Disordered regions lie at residues 329-371 and 384-670; these read ISVS…NRPT and PDLD…KSKR. 2 stretches are compositionally biased toward polar residues: residues 384–395 and 404–451; these read PDLDSSPSTDWN and TPSS…NSGL. Residues S433, S439, and S440 each carry the phosphoserine modification. T442 is modified (phosphothreonine). Position 444 is a phosphoserine (S444). Low complexity predominate over residues 456–467; the sequence is TEPISSPSTSSI. Positions 492–511 are enriched in polar residues; that stretch reads QPSSNVPTKFTGGASESSSV. S549 is modified (phosphoserine). Low complexity predominate over residues 549–560; sequence SPSSISSRLPSS. Polar residues-rich tracts occupy residues 561 to 574 and 583 to 606; these read NLEQ…TKSP and KASS…NYAT. The PH domain occupies 698-808; it reads TADCHGWMRK…WSSAFLKATV (111 aa).

Its subcellular location is the cytoplasm. The protein localises to the membrane. In terms of biological role, has a role in cell elongation and separation. This Schizosaccharomyces pombe (strain 972 / ATCC 24843) (Fission yeast) protein is Protein pob1 (pob1).